The chain runs to 623 residues: Chaperone protein HtpG (623 aa).

An a; substrate-binding region spans residues 1–341 (MEKREFKAES…SQDLSLNISR (341 aa)). The tract at residues 342–549 (EMLQHDRQLS…EGEVSIEMEK (208 aa)) is b. The tract at residues 550–623 (ILSAMPNNQG…FTNDICKLMK (74 aa)) is c.

Belongs to the heat shock protein 90 family. Homodimer.

It localises to the cytoplasm. Molecular chaperone. Has ATPase activity. The protein is Chaperone protein HtpG of Clostridium perfringens (strain ATCC 13124 / DSM 756 / JCM 1290 / NCIMB 6125 / NCTC 8237 / Type A).